We begin with the raw amino-acid sequence, 173 residues long: Large ribosomal subunit protein uL10 (173 aa).

It belongs to the universal ribosomal protein uL10 family. Part of the ribosomal stalk of the 50S ribosomal subunit. The N-terminus interacts with L11 and the large rRNA to form the base of the stalk. The C-terminus forms an elongated spine to which L12 dimers bind in a sequential fashion forming a multimeric L10(L12)X complex.

Its function is as follows. Forms part of the ribosomal stalk, playing a central role in the interaction of the ribosome with GTP-bound translation factors. The polypeptide is Large ribosomal subunit protein uL10 (Nitratidesulfovibrio vulgaris (strain ATCC 29579 / DSM 644 / CCUG 34227 / NCIMB 8303 / VKM B-1760 / Hildenborough) (Desulfovibrio vulgaris)).